Consider the following 359-residue polypeptide: Probable E3 ubiquitin-protein ligase LUL4 (359 aa).

Positions 1 to 35 are disordered; sequence MGISFSNNNRRRDNNNRRHLHHYPPPPPYYYLDPP. The N-myristoyl glycine moiety is linked to residue glycine 2. The segment covering 23–35 has biased composition (pro residues); that stretch reads YPPPPPYYYLDPP. The segment at 148–267 is DAR2 domain; that stretch reads FVFDALFDGS…GSFKVKVVKQ (120 aa). The RING-type zinc-finger motif lies at 302 to 341; it reads CVICMTEAKDTAVLPCRHLCMCSDCAKELRLQSNKCPICR.

It belongs to the RING-type zinc finger family. LOG2 subfamily.

It catalyses the reaction S-ubiquitinyl-[E2 ubiquitin-conjugating enzyme]-L-cysteine + [acceptor protein]-L-lysine = [E2 ubiquitin-conjugating enzyme]-L-cysteine + N(6)-ubiquitinyl-[acceptor protein]-L-lysine.. Its pathway is protein modification; protein ubiquitination. In terms of biological role, acts as an E3 ubiquitin-protein ligase, or as part of E3 complex, which accepts ubiquitin from specific E2 ubiquitin-conjugating enzymes and then transfers it to substrates (in vitro). This chain is Probable E3 ubiquitin-protein ligase LUL4 (LUL4), found in Arabidopsis thaliana (Mouse-ear cress).